The sequence spans 323 residues: Beta-ketoacyl-[acyl-carrier-protein] synthase III (323 aa).

Active-site residues include C113 and H250. An ACP-binding region spans residues 251–255 (QANKR). The active site involves N280.

The protein belongs to the thiolase-like superfamily. FabH family. Homodimer.

The protein localises to the cytoplasm. The catalysed reaction is malonyl-[ACP] + acetyl-CoA + H(+) = 3-oxobutanoyl-[ACP] + CO2 + CoA. It functions in the pathway lipid metabolism; fatty acid biosynthesis. Functionally, catalyzes the condensation reaction of fatty acid synthesis by the addition to an acyl acceptor of two carbons from malonyl-ACP. Catalyzes the first condensation reaction which initiates fatty acid synthesis and may therefore play a role in governing the total rate of fatty acid production. Possesses both acetoacetyl-ACP synthase and acetyl transacylase activities. Its substrate specificity determines the biosynthesis of branched-chain and/or straight-chain of fatty acids. This chain is Beta-ketoacyl-[acyl-carrier-protein] synthase III, found in Brucella suis (strain ATCC 23445 / NCTC 10510).